A 132-amino-acid chain; its full sequence is MSLSDPIANFLTSIRNGQLSMNKVIVVSYSYVIHAILQILLSEGYIDGFTEKSKGSNIKFFEVKLKYYNGAPVISQIARISKPGKRCYCSAKDMPKFYNGLGLYIISTSKGIMSDYNARKSGVGGEILCGVF.

Belongs to the universal ribosomal protein uS8 family. In terms of assembly, part of the 30S ribosomal subunit. Contacts proteins S5 and S12.

One of the primary rRNA binding proteins, it binds directly to 16S rRNA central domain where it helps coordinate assembly of the platform of the 30S subunit. The sequence is that of Small ribosomal subunit protein uS8 from Ehrlichia chaffeensis (strain ATCC CRL-10679 / Arkansas).